A 433-amino-acid polypeptide reads, in one-letter code: Xylose isomerase (433 aa).

Active-site residues include His-99 and Asp-102. Residues Glu-230, Glu-266, His-269, Asp-294, Asp-305, Asp-307, and Asp-337 each contribute to the Mg(2+) site.

It belongs to the xylose isomerase family. In terms of assembly, homotetramer. It depends on Mg(2+) as a cofactor.

The protein localises to the cytoplasm. The enzyme catalyses alpha-D-xylose = alpha-D-xylulofuranose. This chain is Xylose isomerase, found in Cereibacter sphaeroides (strain ATCC 17025 / ATH 2.4.3) (Rhodobacter sphaeroides).